The chain runs to 611 residues: Sensor histidine kinase WalK (611 aa).

Residues 1–13 (MNKVGFFRSIQFK) are Cytoplasmic-facing. The helical transmembrane segment at 14–34 (ITLIYVLLIIIAMQIIGVYFV) threads the bilayer. Residues 35 to 182 (NQVEKSLISS…VFNQMKTINT (148 aa)) lie on the Extracellular side of the membrane. The chain crosses the membrane as a helical span at residues 183–203 (ILASGTGLALVLTALLGIFLA). Positions 204 to 256 (RTITHPLSDMRKQAMELAKGNFSRKVKKYGHDEIGQLATTFNHLTRELEDAQA) constitute an HAMP domain. Over 204 to 611 (RTITHPLSDM…EEQEDDWDEA (408 aa)) the chain is Cytoplasmic. One can recognise a PAS domain in the interval 263–324 (RKLASVIAYM…QENYTFEDLV (62 aa)). In terms of domain architecture, PAC spans 325–379 (EQQDSMLLEIERDDELTVLRVNFSVIQREHGKIDGLIAVIYDVTEQEKMDQERRE). Residues 383–602 (NVSHELRTPL…TITFTLPYKE (220 aa)) form the Histidine kinase domain. H386 carries the post-translational modification Phosphohistidine; by autocatalysis.

Homodimer. Interacts with YycH and YycI. In terms of processing, autophosphorylated.

It localises to the cell membrane. It catalyses the reaction ATP + protein L-histidine = ADP + protein N-phospho-L-histidine.. Member of the two-component regulatory system WalK/WalR involved in the regulation of the ftsAZ operon, the yocH and ykvT, cwlO, lytE, ydjM, yjeA, yoeB genes and the tagAB and tagDEF operons. Phosphorylates WalR. The sequence is that of Sensor histidine kinase WalK from Bacillus subtilis (strain 168).